Reading from the N-terminus, the 49-residue chain is Large ribosomal subunit protein bL33A (49 aa).

This sequence belongs to the bacterial ribosomal protein bL33 family.

In Latilactobacillus sakei subsp. sakei (strain 23K) (Lactobacillus sakei subsp. sakei), this protein is Large ribosomal subunit protein bL33A.